We begin with the raw amino-acid sequence, 275 residues long: AA9 family lytic polysaccharide monooxygenase AA9-X282 (275 aa).

The N-terminal stretch at 1–17 (MFTKLIIAASLAASVAA) is a signal peptide. His-18 provides a ligand contact to Cu(2+). Residue Thr-20 is modified to Phosphothreonine. 2 positions are modified to phosphoserine: Ser-43 and Ser-49. Position 50 is a phosphothreonine (Thr-50). Ser-58 carries the post-translational modification Phosphoserine. An intrachain disulfide couples Cys-66 to Cys-185. His-96 is a Cu(2+) binding site. Ser-130 carries the post-translational modification Phosphoserine. Residues His-171 and Gln-180 each contribute to the O2 site. Tyr-182 lines the Cu(2+) pocket. The tract at residues 236–265 (TSPAVANTPYPTTATWNTALQPSTVPTAVP) is X282 extension. The short motif at 268 to 275 (GTPGIGKA) is the 9res motif element.

The protein belongs to the polysaccharide monooxygenase AA9 family. Cu(2+) is required as a cofactor.

It is found in the secreted. It catalyses the reaction [(1-&gt;4)-beta-D-glucosyl]n+m + reduced acceptor + O2 = 4-dehydro-beta-D-glucosyl-[(1-&gt;4)-beta-D-glucosyl]n-1 + [(1-&gt;4)-beta-D-glucosyl]m + acceptor + H2O.. Functionally, lytic polysaccharide monooxygenase (LPMO) that depolymerizes crystalline and amorphous polysaccharides via the oxidation of scissile alpha- or beta-(1-4)-glycosidic bonds, yielding C1 oxidation products. Catalysis by LPMOs requires the reduction of the active-site copper from Cu(II) to Cu(I) by a reducing agent and H(2)O(2) or O(2) as a cosubstrate. Shows only weak binding properties to cellulose, and low cellulolytic oxidative activity which questions the involvement of X282 extension-containing AA9 proteins in the degradation of plant cell wall and opens new avenues as to the divergence of function of some AA9 members. The polypeptide is AA9 family lytic polysaccharide monooxygenase AA9-X282 (Trametes coccinea (strain BRFM310) (Pycnoporus coccineus)).